Consider the following 225-residue polypeptide: PKHD-type hydroxylase YbiX (225 aa).

Positions 78-177 (TLSTPLFNRY…RVASFMWIQS (100 aa)) constitute a Fe2OG dioxygenase domain. Fe cation-binding residues include His-96, Asp-98, and His-158. Arg-168 provides a ligand contact to 2-oxoglutarate.

Fe(2+) serves as cofactor. Requires L-ascorbate as cofactor.

The chain is PKHD-type hydroxylase YbiX from Shigella flexneri serotype 5b (strain 8401).